We begin with the raw amino-acid sequence, 323 residues long: MADIDKLNIDSIIQRLLEVRGSKPGKNVQLQENEIRGLCLKSREIFLSQPILLELEAPLKICGDIHGQYYDLLRLFEYGGFPPESNYLFLGDYVDRGKQSLETICLLLAYKIKYPENFFLLRGNHECASINRIYGFYDECKRRYNIKLWKTFTDCFNCLPIAAIVDEKIFCCHGGLSPDLQSMEQIRRIMRPTDVPDQGLLCDLLWSDPDKDVLGWGENDRGVSFTFGAEVVAKFLHKHDLDLICRAHQVVEDGYEFFAKRQLVTLFSAPNYCGEFDNAGAMMSVDETLMCSFQILKPAEKKKPNATRPVTPPRGMITKQAKK.

Position 2 is an N-acetylalanine (A2). Positions 64, 66, 92, and 124 each coordinate Mn(2+). The Proton donor role is filled by H125. Residues H173 and H248 each coordinate Mn(2+). Positions 302-323 (KKPNATRPVTPPRGMITKQAKK) are disordered. Residues T307 and T311 each carry the phosphothreonine modification.

It belongs to the PPP phosphatase family. PP-1 subfamily. PP1 comprises a catalytic subunit, PPP1CA, PPP1CB or PPP1CC, which is folded into its native form by inhibitor 2 and glycogen synthetase kinase 3, and then complexed to one or several targeting or regulatory subunits. PPP1R12A, PPP1R12B and PPP1R12C mediate binding to myosin. PPP1R3A (in skeletal muscle), PPP1R3B (in sliver), PPP1R3C, PPP1R3D and PPP1R3F (in brain) mediate binding to glycogen. PPP1R15A and PPP1R15B mediate binding to EIF2S1. Part of a complex containing PPP1R15B, PP1 and NCK1/2. Interacts with PPP1R3B, PPP1R7 and CDCA2. Isoform 2 interacts with SPZ1. Interacts with IKFZ1; the interaction targets PPP1CC to pericentromeric heterochromatin, dephosphorylates IKAROS, stabilizes it and prevents it from degradation. Interacts with NOM1 and PPP1R8. Component of the PTW/PP1 phosphatase complex, composed of PPP1R10/PNUTS, TOX4, WDR82, and PPP1CA or PPP1CB or PPP1CC. Interacts with PPP1R8. Interacts with NEK2. Interacts with URI1; the interaction is phosphorylation-dependent and occurs in a growth factor-dependent manner. Interacts with FOXP3. Interacts with TMEM225 (via RVxF motif). Interacts with MKI67. Interacts with RRP1B; this targets PPP1CC to the nucleolus. Found in a complex with PPP1CA, PPP1CC, SHC1 and PEAK1. Interacts with DYNLT4. Interacts (via RVxF motif) with FIRRM; regulates PLK1 kinase activity. Interacts with the KNL1 complex subunit KNL1; the interaction is direct and mutually exclusive with KNL1 binding to microtubules. Component of the SHOC2-MRAS-PP1c (SMP) complex consisting of SHOC2, GTP-bound M-Ras/MRAS and the catalytic subunit of protein phosphatase 1 (either PPP1CA, PPP1CB or PPP1CC). SHOC2 and PP1c preferably bind M-Ras/MRAS, but they also bind K-Ras/KRAS, N-Ras/NRAS and H-Ras/HRAS; these interactions are GTP-dependent and both SHOC2 and PP1c are required to form a stable complex. Interacts with SHOC2 in the absence of Ras GTPases. The cofactor is Mn(2+). In terms of processing, phosphorylated by NEK2. Isoform 2 is expressed only in testis, in the late spermatocytes and early spematids (at protein level).

Its subcellular location is the cytoplasm. It localises to the nucleus. The protein resides in the cleavage furrow. The protein localises to the nucleolus. It is found in the nucleoplasm. Its subcellular location is the chromosome. It localises to the centromere. The protein resides in the kinetochore. The protein localises to the nucleus speckle. It is found in the midbody. Its subcellular location is the mitochondrion. It localises to the cytoskeleton. The protein resides in the microtubule organizing center. It catalyses the reaction O-phospho-L-seryl-[protein] + H2O = L-seryl-[protein] + phosphate. It carries out the reaction O-phospho-L-threonyl-[protein] + H2O = L-threonyl-[protein] + phosphate. Its activity is regulated as follows. Inactivated by binding to URI1. Functionally, protein phosphatase that associates with over 200 regulatory proteins to form highly specific holoenzymes which dephosphorylate hundreds of biological targets. Protein phosphatase 1 (PP1) is essential for cell division, and participates in the regulation of glycogen metabolism, muscle contractility and protein synthesis. Dephosphorylates RPS6KB1. Involved in regulation of ionic conductances and long-term synaptic plasticity. May play an important role in dephosphorylating substrates such as the postsynaptic density-associated Ca(2+)/calmodulin dependent protein kinase II. Component of the PTW/PP1 phosphatase complex, which plays a role in the control of chromatin structure and cell cycle progression during the transition from mitosis into interphase. In balance with CSNK1D and CSNK1E, determines the circadian period length, through the regulation of the speed and rhythmicity of PER1 and PER2 phosphorylation. May dephosphorylate CSNK1D and CSNK1E. Regulates the recruitment of the SKA complex to kinetochores. Core component of the SHOC2-MRAS-PP1c (SMP) holophosphatase complex that regulates the MAPK pathway activation. Dephosphorylates MKI67 at the onset of anaphase. The SMP complex specifically dephosphorylates the inhibitory phosphorylation at 'Ser-259' of RAF1 kinase, 'Ser-365' of BRAF kinase and 'Ser-214' of ARAF kinase, stimulating their kinase activities. The SMP complex enhances the dephosphorylation activity and substrate specificity of PP1c. In terms of biological role, required for normal male fertility. In Rattus norvegicus (Rat), this protein is Serine/threonine-protein phosphatase PP1-gamma catalytic subunit (Ppp1cc).